A 565-amino-acid chain; its full sequence is Ubiquitin carboxyl-terminal hydrolase 21 (565 aa).

2 stretches are compositionally biased toward basic and acidic residues: residues 1–14 (MPQASEHRLGRTRE) and 58–70 (PPDERLKKLDLGR). The tract at residues 1–128 (MPQASEHRLG…LRPMGIALGG (128 aa)) is disordered. Low complexity predominate over residues 71 to 81 (GRTSGSRPRGP). Over residues 104–116 (SRTNLTRSKSVSS) the composition is skewed to polar residues. Residues 134 to 152 (ELGAALSRLALRPEPPTLR) carry the Nuclear export signal motif. The USP domain occupies 212–558 (VGLRNLGNTC…EGYVLFYQLM (347 aa)). Cys221 serves as the catalytic Nucleophile. The interval 324–347 (APPILASGPVPSPPRRGGALHEEP) is disordered. Positions 384, 387, 437, and 440 each coordinate Zn(2+). Residue His518 is the Proton acceptor of the active site.

Belongs to the peptidase C19 family. USP21 subfamily. In terms of assembly, interacts with BEND3.

The protein localises to the cytoplasm. Its subcellular location is the nucleus. The enzyme catalyses Thiol-dependent hydrolysis of ester, thioester, amide, peptide and isopeptide bonds formed by the C-terminal Gly of ubiquitin (a 76-residue protein attached to proteins as an intracellular targeting signal).. In terms of biological role, deubiquitinates histone H2A, a specific tag for epigenetic transcriptional repression, thereby acting as a coactivator. Deubiquitination of histone H2A releaves the repression of di- and trimethylation of histone H3 at 'Lys-4', resulting in regulation of transcriptional initiation. Regulates gene expression via histone H2A deubiquitination. Deubiquitinates BAZ2A/TIP5 leading to its stabilization. Also capable of removing NEDD8 from NEDD8 conjugates but has no effect on Sentrin-1 conjugates. Also acts as a negative regulator of the ribosome quality control (RQC) by mediating deubiquitination of 40S ribosomal proteins RPS10/eS10 and RPS20/uS10, thereby antagonizing ZNF598-mediated 40S ubiquitination. The polypeptide is Ubiquitin carboxyl-terminal hydrolase 21 (Usp21) (Rattus norvegicus (Rat)).